A 1254-amino-acid polypeptide reads, in one-letter code: Structural polyprotein (1254 aa).

Residues 1 to 33 are necessary for nucleocapsid assembly and virus assembly; sequence MFPFQPMYPMQPMPYRNPFAAPRRPWFPRTDPF. The host transcription inhibition stretch occupies residues 33–68; that stretch reads FLAMQVQELTRSMANLTFKQRRGAPPEGPPAKKSKR. The Supraphysiological nuclear export signal motif lies at 41–48; the sequence is LTRSMANL. Asn47 carries an N-linked (GlcNAc...) asparagine; by host glycan. The disordered stretch occupies residues 48-118; that stretch reads LTFKQRRGAP…KKPGKRQRMV (71 aa). Positions 64 to 68 match the Nuclear localization signal motif; the sequence is KKSKR. Positions 76–91 are enriched in basic residues; that stretch reads GGQRKKKKNEGKKKAK. Residues 90 to 126 are binding to the viral RNA; sequence AKTGPPNLKTQNGNKKKTNKKPGKRQRMVMKLESDKT. Thr92 and Thr107 each carry phosphothreonine. A compositionally biased stretch (basic residues) spans 103 to 117; the sequence is NKKKTNKKPGKRQRM. Positions 111 to 125 are ribosome-binding; that stretch reads PGKRQRMVMKLESDK. Ser123 is subject to Phosphoserine. A Peptidase S3 domain is found at 125–274; that stretch reads KTFPIMLEGK…KYTPENCEQW (150 aa). At Thr126 the chain carries Phosphothreonine. His151 serves as the catalytic Charge relay system. The interaction with spike glycoprotein E2 stretch occupies residues 167–172; sequence KKASKY. Active-site charge relay system residues include Asp173 and Ser225. The segment at 259 to 263 is interaction with spike glycoprotein E2; that stretch reads EKGVT. The functions as an uncleaved signal peptide for the precursor of protein E3/E2 stretch occupies residues 275–286; that stretch reads SLVTTMCLLANV. Topologically, residues 275 to 702 are extracellular; that stretch reads SLVTTMCLLA…YHRYPMSTIT (428 aa). Disulfide bonds link Cys281-Cys290, Cys352-Cys456, Cys355-Cys360, Cys423-Cys437, Cys484-Cys599, Cys533-Cys559, and Cys535-Cys553. Asn285 carries an N-linked (GlcNAc...) asparagine; by host glycan. Residues Asn545 and Asn651 are each glycosylated (N-linked (GlcNAc...) asparagine; by host). The chain crosses the membrane as a helical span at residues 703–723; sequence GLSICAAIVAVSIAASTWLLC. An interaction with the capsid protein region spans residues 724–728; that stretch reads RSRAS. Topologically, residues 724–756 are cytoplasmic; it reads RSRASCLTPYRLTPNAKMPLCLAVLCCARSARA. 3 S-palmitoyl cysteine; by host lipidation sites follow: Cys729, Cys749, and Cys750. A disulfide bond links Cys729 and Cys750. Residues 735 to 754 are transient transmembrane before p62-6K protein processing; the sequence is LTPNAKMPLCLAVLCCARSA. The Extracellular portion of the chain corresponds to 757-768; it reads ETTWESLDHLWN. The helical transmembrane segment at 769 to 789 threads the bilayer; sequence NNQQMFWTQLLIPLAALIVVT. Arg790 is a topological domain (cytoplasmic). Residues 791 to 811 traverse the membrane as a helical segment; that stretch reads LLKCMCCVVPFLVVAGAAGAG. At 812 to 1224 the chain is on the extracellular side; that stretch reads AYEHATTMPN…SKTAWTWLTS (413 aa). 4 disulfide bridges follow: Cys861–Cys926, Cys874–Cys906, Cys875–Cys908, and Cys880–Cys890. The tract at residues 896-913 is E1 fusion peptide loop; that stretch reads VYPFMWGGAYCFCDTENT. 2 N-linked (GlcNAc...) asparagine; by host glycosylation sites follow: Asn946 and Asn1082. Intrachain disulfides connect Cys1071–Cys1083, Cys1113–Cys1188, Cys1118–Cys1192, and Cys1140–Cys1182. A helical membrane pass occupies residues 1225–1245; that stretch reads LLGGSAVIIIIGLVLATLVAM. Over 1246-1254 the chain is Cytoplasmic; that stretch reads YVLTNQKHN.

As to quaternary structure, homodimer. Homomultimer. Interacts with host karyopherin KPNA4; this interaction allows the nuclear import of the viral capsid protein. Interacts with spike glycoprotein E2. Interacts with host IRAK1; the interaction leads to inhibition of IRAK1-dependent signaling. Part of a tetrameric complex composed of host CRM1, host importin alpha/beta dimer and the viral capsid; this complex blocks the receptor-mediated transport through the nuclear pore. Interacts with host phosphatase PPP1CA; this interaction dephosphorylates the capsid protein, which increases its ability to bind to the viral genome. The precursor of protein E3/E2 and E1 form a heterodimer shortly after synthesis. In terms of assembly, interacts with spike glycoprotein E2. The precursor of protein E3/E2 and E1 form a heterodimer shortly after synthesis. Processing of the precursor of protein E3/E2 into E2 and E3 results in a heterodimer of the spike glycoproteins E2 and E1. Spike at virion surface are constituted of three E2-E1 heterodimers. After target cell attachment and endocytosis, E1 change conformation to form homotrimers. Interacts with 6K protein. Interacts with host LDLRAD3; this interaction mediates viral entry to the host cell. As to quaternary structure, interacts with spike glycoprotein E1. Processing of the precursor of protein E3/E2 into E2 and E3 results in a heterodimer of the spike glycoproteins E2 and E1. Spike at virion surface are constituted of a trimer of E2-E1 heterodimers. Interacts with 6K protein. Interacts with host LDLRAD3; this interaction mediates viral entry to the host cell. Oligomer. Interacts with spike glycoprotein E1. Interacts with spike glycoprotein E2. Structural polyprotein: Specific enzymatic cleavages in vivo yield mature proteins. Capsid protein is auto-cleaved during polyprotein translation, unmasking a signal peptide at the N-terminus of the precursor of E3/E2. The remaining polyprotein is then targeted to the host endoplasmic reticulum, where host signal peptidase cleaves it into pE2, 6K and E1 proteins. pE2 is further processed to mature E3 and E2 by host furin in trans-Golgi vesicle. Post-translationally, phosphorylated on serine and threonine residues. In terms of processing, palmitoylated via thioester bonds. These palmitoylations may induce disruption of the C-terminus transmembrane. This would result in the reorientation of E2 C-terminus from lumenal to cytoplasmic side. N-glycosylated. Post-translationally, palmitoylated via thioester bonds.

The protein resides in the virion. It localises to the host cytoplasm. The protein localises to the host cell membrane. Its subcellular location is the host nucleus. It is found in the virion membrane. The protein resides in the host Golgi apparatus. It localises to the host trans-Golgi network. The protein localises to the host endoplasmic reticulum. It catalyses the reaction Autocatalytic release of the core protein from the N-terminus of the togavirus structural polyprotein by hydrolysis of a -Trp-|-Ser- bond.. Forms an icosahedral capsid with a T=4 symmetry composed of 240 copies of the capsid protein surrounded by a lipid membrane through which penetrate 80 spikes composed of trimers of E1-E2 heterodimers. The capsid protein binds to the viral RNA genome at a site adjacent to a ribosome binding site for viral genome translation following genome release. Possesses a protease activity that results in its autocatalytic cleavage from the nascent structural protein. Following its self-cleavage, the capsid protein transiently associates with ribosomes, and within several minutes the protein binds to viral RNA and rapidly assembles into icosahedric core particles. The resulting nucleocapsid eventually associates with the cytoplasmic domain of the spike glycoprotein E2 at the cell membrane, leading to budding and formation of mature virions. In case of infection, new virions attach to target cells and after clathrin-mediated endocytosis their membrane fuses with the host endosomal membrane. This leads to the release of the nucleocapsid into the cytoplasm, followed by an uncoating event necessary for the genomic RNA to become accessible. The uncoating might be triggered by the interaction of capsid proteins with ribosomes. Binding of ribosomes would release the genomic RNA since the same region is genomic RNA-binding and ribosome-binding. Specifically inhibits interleukin-1 receptor-associated kinase 1/IRAK1-dependent signaling during viral entry, representing a means by which the alphaviruses may evade innate immune detection and activation prior to viral gene expression. Inhibits host transcription. Forms a tetrameric complex with XPO1/CRM1 and the nuclear import receptor importin. This complex blocks the central channel of host nuclear pores thereby inhibiting the receptor-mediated nuclear transport and thus the host mRNA and rRNA transcription. The inhibition of transcription is linked to a cytopathic effect on the host cell. Its function is as follows. Provides the signal sequence for the translocation of the precursor of protein E3/E2 to the host endoplasmic reticulum. Furin-cleaved E3 remains associated with spike glycoprotein E1 and mediates pH protection of the latter during the transport via the secretory pathway. After virion release from the host cell, the assembly protein E3 is gradually released in the extracellular space. In terms of biological role, plays a role in viral attachment to target host cell, by binding to the cell receptor LDLRAD3. Synthesized as a p62 precursor which is processed by furin at the cell membrane just before virion budding, giving rise to E2-E1 heterodimer. The p62-E1 heterodimer is stable, whereas E2-E1 is unstable and dissociate at low pH. p62 is processed at the last step, presumably to avoid E1 fusion activation before its final export to cell surface. E2 C-terminus contains a transitory transmembrane that would be disrupted by palmitoylation, resulting in reorientation of the C-terminal tail from lumenal to cytoplasmic side. This step is critical since E2 C-terminus is involved in budding by interacting with capsid proteins. This release of E2 C-terminus in cytoplasm occurs lately in protein export, and precludes premature assembly of particles at the endoplasmic reticulum membrane. Functionally, acts as a viroporin that participates in virus glycoprotein processing and transport to the plasma membrane, cell permeabilization and budding of viral particles. Disrupts the calcium homeostasis of the cell, probably at the endoplasmic reticulum level. This leads to cytoplasmic calcium elevation. Because of its lipophilic properties, the 6K protein is postulated to influence the selection of lipids that interact with the transmembrane domains of the glycoproteins, which, in turn, affects the deformability of the bilayer required for the extreme curvature that occurs as budding proceeds. Present in low amount in virions, about 3% compared to viral glycoproteins. Class II viral fusion protein. Fusion activity is inactive as long as E1 is bound to E2 in mature virion. After virus attachment to cell receptor LDLRAD3 and endocytosis, acidification of the endosome induce dissociation of E1/E2 heterodimer and concomitant trimerization of the E1 subunits. This E1 trimer is fusion active, and promotes release of viral nucleocapsid in cytoplasm after endosome and viral membrane fusion. Efficient fusion requires the presence of cholesterol and sphingolipid in the target membrane. The protein is Structural polyprotein of Venezuelan equine encephalitis virus (strain Everglades Fe3-7c) (VEEV).